Here is a 772-residue protein sequence, read N- to C-terminus: MFANRVRQAQKLYQKRFFSLGNNSTISKQQFKNSSNNNNNKNGGNKNGFYQKAFIATTVALTTTLLTATTLLDDNTNSEKEILKSQRQTFEKYASTTLEGERQMTAEDFLSALTTLESDKQSGEHEILKASLDADKFKVLFQMADVDHTGYISFDEYVMFDELMAKPEAEYFLAFKLFDRDGNGYISKNDFKHVITASLDPSIPFNFDCELVNLYFGDGRTELNYSQFTQLLKDLQQERIKQEFKFHDKYNSGYIPRDKFAKVLGSVKLRKIPDHVRDKLESISELNLLSGHPNEVSYSQFVAANDMLLHIPSYGRVLKAAILKNKKDNINKEEFLTEARSSTSIEITPLEIDLIFHLFDLNKDGKLSISDFEKSTGLNINKIGGGTNYSDSYPSDSHVTIQNSSTTPSPSTPITNTAAAIALNKKHGKTFAQQVLESIENFALGSIAGGIGAAAVYPIDLVKTRMQNQRAVDPAKRLYVNSWDCFKKVVKFEGVRGLYKGILPQMVGVAPEKAIKLTVNDLLRDLFGDKSKGEIYFPLEVLAGGFAGMSQVCVTNPLEIVKIRLQVQSTGPKVSAITIIKELGLAGLYKGAGACLLRDIPFSAIYFPTYAKMKTILANEDGKLGPMDLLLAGAVAGIPAASLVTPADVIKTRLQVKANAGEQTYTGIRDCFQKILKEEGPRALFKGALARVFRSSPQFGVTLVSYELLQKALLPDAEYKPPTNAPITQKDFDVIRGNTNTVQRVIDMESKFGTLHQTRDNNKSSNGGENKN.

Residues 1–377 (MFANRVRQAQ…SISDFEKSTG (377 aa)) form an N-terminal domain region. EF-hand domains are found at residues 132-165 (LDAD…ELMA), 166-201 (KPEA…SLDP), 235-270 (LQQE…VKLR), and 347-382 (ITPL…NINK). Residues Asp145, Asp147, Thr149, Tyr151, Glu156, Asp179, Asp181, Asn183, Tyr185, and Asp190 each coordinate Ca(2+). Asp360, Asn362, Asp364, Lys366, and Asp371 together coordinate Ca(2+). Residues 378–422 (LNINKIGGGTNYSDSYPSDSHVTIQNSSTTPSPSTPITNTAAAIA) form a linker loop domain region. The carrier domain stretch occupies residues 432–720 (AQQVLESIEN…KALLPDAEYK (289 aa)). Solcar repeat units lie at residues 436–526 (LESI…LRDL), 535–616 (IYFP…MKTI), and 624–712 (LGPM…LQKA). The next 6 membrane-spanning stretches (helical) occupy residues 442 to 459 (FALG…VYPI), 501 to 520 (GILP…LTVN), 545 to 558 (GFAG…TNPL), 591 to 610 (GAGA…FPTY), 630 to 647 (LLAG…VTPA), and 687 to 706 (GALA…LVSY). The tract at residues 721–772 (PPTNAPITQKDFDVIRGNTNTVQRVIDMESKFGTLHQTRDNNKSSNGGENKN) is C-terminal domain. Residues 751-772 (KFGTLHQTRDNNKSSNGGENKN) are disordered. Over residues 763–772 (KSSNGGENKN) the composition is skewed to low complexity.

The protein belongs to the mitochondrial carrier (TC 2.A.29) family. In terms of assembly, homodimer (via N-terminus).

It is found in the mitochondrion inner membrane. In terms of biological role, mitochondrial and calcium-binding carrier that catalyzes the calcium-dependent exchange of cytoplasmic glutamate with mitochondrial aspartate across the mitochondrial inner membrane. This Dictyostelium discoideum (Social amoeba) protein is Calcium-binding mitochondrial carrier protein (mcfO).